Here is a 474-residue protein sequence, read N- to C-terminus: tRNA-2-methylthio-N(6)-dimethylallyladenosine synthase (474 aa).

Residues 3–120 (KKLHIKTWGC…LPEMINSVRG (118 aa)) enclose the MTTase N-terminal domain. 6 residues coordinate [4Fe-4S] cluster: Cys-12, Cys-49, Cys-83, Cys-157, Cys-161, and Cys-164. In terms of domain architecture, Radical SAM core spans 143 to 375 (RAEGPTAFVS…QERINQQAMA (233 aa)). One can recognise a TRAM domain in the interval 378 to 441 (RRMLGTTQRI…PNSLRGKVVR (64 aa)).

It belongs to the methylthiotransferase family. MiaB subfamily. Monomer. The cofactor is [4Fe-4S] cluster.

The protein resides in the cytoplasm. The enzyme catalyses N(6)-dimethylallyladenosine(37) in tRNA + (sulfur carrier)-SH + AH2 + 2 S-adenosyl-L-methionine = 2-methylsulfanyl-N(6)-dimethylallyladenosine(37) in tRNA + (sulfur carrier)-H + 5'-deoxyadenosine + L-methionine + A + S-adenosyl-L-homocysteine + 2 H(+). Functionally, catalyzes the methylthiolation of N6-(dimethylallyl)adenosine (i(6)A), leading to the formation of 2-methylthio-N6-(dimethylallyl)adenosine (ms(2)i(6)A) at position 37 in tRNAs that read codons beginning with uridine. The protein is tRNA-2-methylthio-N(6)-dimethylallyladenosine synthase of Shigella boydii serotype 4 (strain Sb227).